We begin with the raw amino-acid sequence, 366 residues long: Ferredoxin--NADP reductase, leaf isozyme 2, chloroplastic (366 aa).

Residues 1–48 (MAAVNTVSSLPCSKAGAAVAGGAPRPSTCSVFYPPRCWSKRSSGNGVR) constitute a chloroplast transit peptide. One can recognise an FAD-binding FR-type domain in the interval 87 to 209 (KEPYTGRCLL…TGPVGKEMLM (123 aa)). Residues 145–148 (RLYS), 166–168 (CVK), Tyr-172, and 183–185 (VCS) contribute to the FAD site. Ser-148 and Lys-168 together coordinate NADP(+). Residues Cys-184 and Cys-189 are joined by a disulfide bond. Ser-185 bears the Phosphoserine mark. Thr-216 carries the phosphothreonine modification. Thr-224 lines the FAD pocket. Residues Thr-224, 256–257 (VP), 286–287 (SR), Lys-296, 325–326 (GL), and Glu-364 contribute to the NADP(+) site.

Belongs to the ferredoxin--NADP reductase type 1 family. In terms of assembly, heterodimer with LFNR1. Component of high molecular weight thylakoid LFNRs-containing protein complexes containing LIR1, LFNR1, LFNR2, TIC62 and TROL proteins. Interacts directly with LIR1 and TIC62; LIR1 increases the affinity of LFNR1 and LFNR2 for TIC62. FAD serves as cofactor. In terms of processing, may form interchain disulfide bonds with LIR1.

The protein localises to the plastid. It is found in the chloroplast stroma. Its subcellular location is the chloroplast thylakoid membrane. It carries out the reaction 2 reduced [2Fe-2S]-[ferredoxin] + NADP(+) + H(+) = 2 oxidized [2Fe-2S]-[ferredoxin] + NADPH. It functions in the pathway energy metabolism; photosynthesis. Functionally, plays a key role in regulating the relative amounts of cyclic and non-cyclic electron flow to meet the demands of the plant for ATP and reducing power. The polypeptide is Ferredoxin--NADP reductase, leaf isozyme 2, chloroplastic (Oryza sativa subsp. japonica (Rice)).